Consider the following 184-residue polypeptide: GTP cyclohydrolase 1 (184 aa).

Zn(2+) contacts are provided by Cys75, His78, and Cys146.

It belongs to the GTP cyclohydrolase I family. As to quaternary structure, homomer.

The enzyme catalyses GTP + H2O = 7,8-dihydroneopterin 3'-triphosphate + formate + H(+). The protein operates within cofactor biosynthesis; 7,8-dihydroneopterin triphosphate biosynthesis; 7,8-dihydroneopterin triphosphate from GTP: step 1/1. This chain is GTP cyclohydrolase 1, found in Streptococcus pneumoniae (strain Hungary19A-6).